Consider the following 74-residue polypeptide: UPF0352 protein PM1884 (74 aa).

It belongs to the UPF0352 family.

The chain is UPF0352 protein PM1884 from Pasteurella multocida (strain Pm70).